The primary structure comprises 182 residues: UPF0301 protein NMC1274 (182 aa).

The protein belongs to the UPF0301 (AlgH) family.

The protein is UPF0301 protein NMC1274 of Neisseria meningitidis serogroup C / serotype 2a (strain ATCC 700532 / DSM 15464 / FAM18).